A 78-amino-acid polypeptide reads, in one-letter code: Spermatid-specific protein T1 (78 aa).

The hydrophobic stretch occupies residues 1-21; the sequence is MKVAANSSKMLAEKLELMKGG. Residues 1-78 are disordered; sequence MKVAANSSKM…YSRRRYRRRR (78 aa). Positions 20-78 are enriched in basic residues; it reads GGRRRRRRSRRRRRRSRRRSRSPYRRRYRRRRRRRRRRSRRRRYRRRRSYSRRRYRRRR.

In terms of processing, phosphorylation occurs at different degrees. The triphosphorylated form may be predominant in T1. SP1 appears to be phosphorylated in elongated spermatids, but dephosphorylated in mature sperm cells. Testis.

It is found in the nucleus. It localises to the chromosome. Cuttlefish spermiogenesis is characterized by a double nuclear protein transition: histones -&gt; spermatid-specific proteins (T1/T2) -&gt; protamines (SP1/SP2). The protamines compact sperm DNA into a highly condensed, stable and inactive complex. This is Spermatid-specific protein T1 from Sepia officinalis (Common cuttlefish).